The primary structure comprises 234 residues: Zinc finger FYVE domain-containing protein 21 (234 aa).

Residues 44–104 form an FYVE-type zinc finger; it reads DKECPRCMQC…QCADCALVSH (61 aa). Residues Cys50, Cys53, Cys66, Cys69, Cys74, Cys77, Cys96, and Cys99 each coordinate Zn(2+). The PH-like stretch occupies residues 107–234; sequence AEFYDKQLKV…TKLLYESRDQ (128 aa).

As to quaternary structure, interacts with PTK2/FAK1. In terms of tissue distribution, widely expressed.

It is found in the cell junction. Its subcellular location is the focal adhesion. The protein localises to the cytoplasmic vesicle. It localises to the endosome. Its function is as follows. Plays a role in cell adhesion, and thereby in cell motility which requires repeated formation and disassembly of focal adhesions. Regulates microtubule-induced PTK2/FAK1 dephosphorylation, an event important for focal adhesion disassembly, as well as integrin beta-1/ITGB1 cell surface expression. The chain is Zinc finger FYVE domain-containing protein 21 (Zfyve21) from Mus musculus (Mouse).